Consider the following 636-residue polypeptide: MAAEEEAAAGGKVLREENQCIAPVVSSRVSPGTRPTAMGSFSSHMTEFPRKRKGSDSDPSQSGIMTEKVVEKLSQNPLTYLLSTRIEISASSGSRVEDGEHQVKMKAFREAHSQTEKRRRDKMNNLIEELSAMIPQCNPMARKLDKLTVLRMAVQHLRSLKGLTNSYVGSNYRPSFLQDNELRHLILKTAEGFLFVVGCERGKILFVSKSVSKILNYDQASLTGQSLFDFLHPKDVAKVKEQLSSFDISPREKLIDAKTGLQVHSNLHAGRTRVYSGSRRSFFCRIKSCKISVKEEHGCLPNSKKKEHRKFYTIHCTGYLRSWPPNIVGMEEERNSKKDNSNFTCLVAIGRLQPYIVPQNSGEINVKPTEFITRFAVNGKFVYVDQRATAILGYLPQELLGTSCYEYFHQDDHNNLTDKHKAVLQSKEKILTDSYKFRAKDGSFVTLKSQWFSFTNPWTKELEYIVSVNTLVLGHSEPGEASFLPCSSQSSEESSRQSCMSVPGMSTGTVLGAGSIGTDIANEILDLQRLQSSSYLDDSSPTGLMKDTHTVNCRSMSNKELFPPSPSEMGELEATRQNQSTVAVHSHEPLLSDGAQLDFDALCDNDDTAMAAFMNYLEAEGGLGDPGDFSDIQWTL.

Positions 25–62 are disordered; sequence VSSRVSPGTRPTAMGSFSSHMTEFPRKRKGSDSDPSQS. The segment at 46 to 258 is interaction with PER2; sequence TEFPRKRKGS…SPREKLIDAK (213 aa). The Nuclear localization signal signature appears at 49 to 54; it reads PRKRKG. Residues 107-160 form the bHLH domain; sequence AFREAHSQTEKRRRDKMNNLIEELSAMIPQCNPMARKLDKLTVLRMAVQHLRSL. The Nuclear export signal 1 motif lies at 177-187; the sequence is LQDNELRHLIL. The region spanning 178-250 is the PAS 1 domain; it reads QDNELRHLIL…EQLSSFDISP (73 aa). Residue Lys287 forms a Glycyl lysine isopeptide (Lys-Gly) (interchain with G-Cter in SUMO2 and SUMO3) linkage. A Glycyl lysine isopeptide (Lys-Gly) (interchain with G-Cter in SUMO2) cross-link involves residue Lys294. The region spanning 357 to 427 is the PAS 2 domain; sequence VPQNSGEINV…DKHKAVLQSK (71 aa). The short motif at 392–400 is the Nuclear export signal 2 element; the sequence is LGYLPQELL. A PAC domain is found at 432 to 475; that stretch reads TDSYKFRAKDGSFVTLKSQWFSFTNPWTKELEYIVSVNTLVLGH.

Component of the circadian core oscillator, which includes the CRY proteins, CLOCK, or NPAS2, BMAL1 or BMAL2, CSNK1D and/or CSNK1E, TIMELESS and the PER proteins. Interacts directly with CLOCK to form the BMAL2-CLOCK transactivator. Can form heterodimers or homodimers which interact directly with CLOCK to form the transcription activator. Interacts with NPAS2 and HIF1A. Interacts with PER2. Expressed in fetal brain. Highly expressed in brain and placenta. Lower levels in heart, liver, thymus, kidney and lung. Located to endothelial cells and neuronal cells of the suprachiasmatic nucleus (SCN). Also detected in endothelial cells of the heart, lung and kidney. In the brain, specifically expressed in the thalamus, hippocampus and amygdala.

It is found in the nucleus. In terms of biological role, transcriptional activator which forms a core component of the circadian clock. The circadian clock, an internal time-keeping system, regulates various physiological processes through the generation of approximately 24 hour circadian rhythms in gene expression, which are translated into rhythms in metabolism and behavior. It is derived from the Latin roots 'circa' (about) and 'diem' (day) and acts as an important regulator of a wide array of physiological functions including metabolism, sleep, body temperature, blood pressure, endocrine, immune, cardiovascular, and renal function. Consists of two major components: the central clock, residing in the suprachiasmatic nucleus (SCN) of the brain, and the peripheral clocks that are present in nearly every tissue and organ system. Both the central and peripheral clocks can be reset by environmental cues, also known as Zeitgebers (German for 'timegivers'). The predominant Zeitgeber for the central clock is light, which is sensed by retina and signals directly to the SCN. The central clock entrains the peripheral clocks through neuronal and hormonal signals, body temperature and feeding-related cues, aligning all clocks with the external light/dark cycle. Circadian rhythms allow an organism to achieve temporal homeostasis with its environment at the molecular level by regulating gene expression to create a peak of protein expression once every 24 hours to control when a particular physiological process is most active with respect to the solar day. Transcription and translation of core clock components (CLOCK, NPAS2, BMAL1, BMAL2, PER1, PER2, PER3, CRY1 and CRY2) plays a critical role in rhythm generation, whereas delays imposed by post-translational modifications (PTMs) are important for determining the period (tau) of the rhythms (tau refers to the period of a rhythm and is the length, in time, of one complete cycle). A diurnal rhythm is synchronized with the day/night cycle, while the ultradian and infradian rhythms have a period shorter and longer than 24 hours, respectively. Disruptions in the circadian rhythms contribute to the pathology of cardiovascular diseases, cancer, metabolic syndromes and aging. A transcription/translation feedback loop (TTFL) forms the core of the molecular circadian clock mechanism. Transcription factors, CLOCK or NPAS2 and BMAL1 or BMAL2, form the positive limb of the feedback loop, act in the form of a heterodimer and activate the transcription of core clock genes and clock-controlled genes (involved in key metabolic processes), harboring E-box elements (5'-CACGTG-3') within their promoters. The core clock genes: PER1/2/3 and CRY1/2 which are transcriptional repressors form the negative limb of the feedback loop and interact with the CLOCK|NPAS2-BMAL1|BMAL2 heterodimer inhibiting its activity and thereby negatively regulating their own expression. This heterodimer also activates nuclear receptors NR1D1/2 and RORA/B/G, which form a second feedback loop and which activate and repress BMAL1 transcription, respectively. The CLOCK-BMAL2 heterodimer activates the transcription of SERPINE1/PAI1 and BHLHE40/DEC1. The sequence is that of Basic helix-loop-helix ARNT-like protein 2 from Homo sapiens (Human).